Reading from the N-terminus, the 180-residue chain is Large ribosomal subunit protein uL5 (180 aa).

Belongs to the universal ribosomal protein uL5 family. As to quaternary structure, part of the 50S ribosomal subunit; part of the 5S rRNA/L5/L18/L25 subcomplex. Contacts the 5S rRNA and the P site tRNA. Forms a bridge to the 30S subunit in the 70S ribosome.

This is one of the proteins that bind and probably mediate the attachment of the 5S RNA into the large ribosomal subunit, where it forms part of the central protuberance. In the 70S ribosome it contacts protein S13 of the 30S subunit (bridge B1b), connecting the 2 subunits; this bridge is implicated in subunit movement. Contacts the P site tRNA; the 5S rRNA and some of its associated proteins might help stabilize positioning of ribosome-bound tRNAs. The polypeptide is Large ribosomal subunit protein uL5 (Limosilactobacillus reuteri (strain DSM 20016) (Lactobacillus reuteri)).